A 247-amino-acid polypeptide reads, in one-letter code: Coproheme decarboxylase (247 aa).

Residues R129, 143 to 147, H170, Q183, and S221 each bind Fe-coproporphyrin III; that span reads YPMDK. Residue Y143 is part of the active site.

This sequence belongs to the ChdC family. Type 1 subfamily. Requires Fe-coproporphyrin III as cofactor.

It carries out the reaction Fe-coproporphyrin III + 2 H2O2 + 2 H(+) = heme b + 2 CO2 + 4 H2O. The enzyme catalyses Fe-coproporphyrin III + H2O2 + H(+) = harderoheme III + CO2 + 2 H2O. The catalysed reaction is harderoheme III + H2O2 + H(+) = heme b + CO2 + 2 H2O. It participates in porphyrin-containing compound metabolism; protoheme biosynthesis. In terms of biological role, involved in coproporphyrin-dependent heme b biosynthesis. Catalyzes the decarboxylation of Fe-coproporphyrin III (coproheme) to heme b (protoheme IX), the last step of the pathway. The reaction occurs in a stepwise manner with a three-propionate intermediate. The chain is Coproheme decarboxylase from Bacillus cereus (strain B4264).